A 284-amino-acid polypeptide reads, in one-letter code: MEMO1 family protein MmarC6_1286 (284 aa).

Belongs to the MEMO1 family.

This is MEMO1 family protein MmarC6_1286 from Methanococcus maripaludis (strain C6 / ATCC BAA-1332).